The sequence spans 538 residues: Protein PNS1 (538 aa).

The segment covering Met-1 to Gly-54 has biased composition (low complexity). The interval Met-1–Tyr-67 is disordered. The Cytoplasmic portion of the chain corresponds to Met-1–Asp-88. Residues Leu-89–Ala-109 traverse the membrane as a helical segment. The Extracellular segment spans residues Leu-110 to Thr-137. Asn-134 carries N-linked (GlcNAc...) asparagine glycosylation. A helical membrane pass occupies residues Val-138–Met-158. The Cytoplasmic portion of the chain corresponds to Ala-159–Gln-165. The chain crosses the membrane as a helical span at residues Phe-166–Leu-186. Topologically, residues Trp-187–Trp-191 are extracellular. Residues Ser-192–Ile-212 form a helical membrane-spanning segment. At Ser-213–Ser-239 the chain is on the cytoplasmic side. The chain crosses the membrane as a helical span at residues Leu-240–Ile-260. Residues Tyr-261–Lys-280 lie on the Extracellular side of the membrane. A helical membrane pass occupies residues Gly-281 to Leu-301. At Lys-302 to Ala-335 the chain is on the cytoplasmic side. The chain crosses the membrane as a helical span at residues Leu-336–Leu-356. The Extracellular portion of the chain corresponds to Arg-357–Ser-372. The chain crosses the membrane as a helical span at residues Phe-373–Val-393. Residues Glu-394–Cys-434 are Cytoplasmic-facing. The helical transmembrane segment at Leu-435–Ala-455 threads the bilayer. Residues Tyr-456–Ala-474 lie on the Extracellular side of the membrane. Residues Val-475 to Ile-495 form a helical membrane-spanning segment. Over Ser-496–Arg-538 the chain is Cytoplasmic.

The protein belongs to the CTL (choline transporter-like) family.

The protein localises to the cell membrane. Probably involved in transport through the plasma membrane. The sequence is that of Protein PNS1 (PNS1) from Gibberella zeae (strain ATCC MYA-4620 / CBS 123657 / FGSC 9075 / NRRL 31084 / PH-1) (Wheat head blight fungus).